The following is a 157-amino-acid chain: 2-C-methyl-D-erythritol 2,4-cyclodiphosphate synthase (157 aa).

The a divalent metal cation site is built by aspartate 8 and histidine 10. 4-CDP-2-C-methyl-D-erythritol 2-phosphate is bound by residues 8–10 (DVH) and 34–35 (HS). Histidine 42 contacts a divalent metal cation. 4-CDP-2-C-methyl-D-erythritol 2-phosphate is bound by residues 56 to 58 (DIG), 132 to 135 (TTNE), and arginine 142.

Belongs to the IspF family. As to quaternary structure, homotrimer. A divalent metal cation serves as cofactor.

The enzyme catalyses 4-CDP-2-C-methyl-D-erythritol 2-phosphate = 2-C-methyl-D-erythritol 2,4-cyclic diphosphate + CMP. The protein operates within isoprenoid biosynthesis; isopentenyl diphosphate biosynthesis via DXP pathway; isopentenyl diphosphate from 1-deoxy-D-xylulose 5-phosphate: step 4/6. Involved in the biosynthesis of isopentenyl diphosphate (IPP) and dimethylallyl diphosphate (DMAPP), two major building blocks of isoprenoid compounds. Catalyzes the conversion of 4-diphosphocytidyl-2-C-methyl-D-erythritol 2-phosphate (CDP-ME2P) to 2-C-methyl-D-erythritol 2,4-cyclodiphosphate (ME-CPP) with a corresponding release of cytidine 5-monophosphate (CMP). This is 2-C-methyl-D-erythritol 2,4-cyclodiphosphate synthase from Pelodictyon phaeoclathratiforme (strain DSM 5477 / BU-1).